We begin with the raw amino-acid sequence, 531 residues long: Laccase-4 (531 aa).

The N-terminal stretch at 1-19 (MLSSITLLPLLAAVSTPAF) is a signal peptide. Plastocyanin-like domains lie at 23 to 146 (RNYK…LVIY), 158 to 315 (VDDA…LHYE), and 384 to 507 (SLPT…VSSR). Residue N66 is glycosylated (N-linked (GlcNAc...) asparagine). Cu cation is bound by residues H83 and H85. C104 and C528 are joined by a disulfide. N-linked (GlcNAc...) asparagine glycosylation occurs at N109. Residues H128 and H130 each coordinate Cu cation. N-linked (GlcNAc...) asparagine glycosylation is found at N186, N231, N280, and N395. Positions 427, 430, 432, 479, 480, and 481 each coordinate Cu cation.

Belongs to the multicopper oxidase family. As to quaternary structure, homodimer. Cu cation is required as a cofactor. As to expression, in mycelia, at a higher level than LCC1, LCC2 and LCC3.

The protein resides in the secreted. It catalyses the reaction 4 hydroquinone + O2 = 4 benzosemiquinone + 2 H2O. In terms of biological role, lignin degradation and detoxification of lignin-derived products. This is Laccase-4 (LCC4) from Thanatephorus cucumeris (Black scurf of potato).